A 1342-amino-acid polypeptide reads, in one-letter code: MSLSPHVENASIPKGSTPIPKNRNVSSIGKGEFLGSSSSNNSSFRMNHYSNSGQPSVLDSIRRPNLTPTFSYSNGVYMPESHRTSSFNDSYLPYDKNPYAKTTGSMSNKSNMKIKTKKNAINTNTRKSSGLIYTTKVDKELSSIDKVNDPNINGLVCAGKTHLGLYKFSPSDRSIKCVHDFITPNSNTSTRGTTSLLPKLSKRTRQNKFSTIADVKTGFNNYKNCIAVCNNSTAISIYDLNKSSSIDNPLITSLCEHTRSINSFDFNMVESNLIISGGQDSCVKIWDLRSNKSKSSNRSDISINTASDSIRDVKWMPGYNFASKNDQGSSTYGNLKSGYKFASIHDSGYLLKFDLRQPAQYEKKLNAHTGPGLCLNWHPNQEYIATGGRDGKCCLWFVGDNANAAENTVLNYGNSPSLHVPNTSLNNSGSLAFPKLTINTDYPVTKLKFKPAYSSNIYNSLLGISSMGDEAEVRIYSLARKYIPKHVLLSETPSLGLVWWDENLIFNIDKGTRINGWDINKEPTVLENLSKNTTTWRDLDGNGLLSVDQEIGSYEVVEPELQPTSSTTCKKHPGTIKNPKNGNPENQGIIGGIKKGFSHTGLTSFTPERPPTLKAGPTFSTKSLTLASGASSFNSSSASLTSLTPQTENREEIAIEPPCIITLDIPQIFNNIRLTKIAHSRKKNVISESSSMKNSPVEKFKYLARQLKFSYIREHNVSDSADTAYKNDIENIDVVKNATETHGDNTTTTNNNDDGDDDDDDDDDDDKIIESHLLKKYNFPENNTWATLMNEKVNNKKSKRNSSSSREFDEKDVRSSISSISASRQSHDRSRKIDKNVEAELQEKIQTLVDLISIATHNASVYLSIDDLTNFKIWILIRDSLLWDLKWMTSSQISSDNASNMDANESSDFEAGENLKTGKEFPEEDGAGTSGAESLVEERPQAFRANSDEPSDAEKKPVSKLKEQLKNTEIIPYAQPNEDSDEVLTKLKELQNQRLESRTKMGETVSDDVIIEEDEHEHQEEEQPHDSPTKSAQFHASPIAKSIPILQKREHRKSFIDTFMLHSPNGYNGDTDIGNEDDNISPRFTYNSVSPRSKVSSLQSYATTTSQLETFKKLSSHTAPIIGSPRHAPSRPDSIGREQLSSSLTKKLAKCKKIIADPPWDTKKLIKQLYNQATETGNVVLTVNILFLFQTIYQITEIDIAKDAIAHFLLLLHRYELFGIAADVLKYCPFEDIMGSEGDQSSIRLFCERCGELITNESSKEKLRAEAQQTGNKKIMDKFGYWYCDSCKKKNTSCVLCERPLKKLTMVILPCGHEGHFQCIQEWFLDENEQECPGGCPGVAFI.

A disordered region spans residues 1 to 39; it reads MSLSPHVENASIPKGSTPIPKNRNVSSIGKGEFLGSSSS. WD repeat units follow at residues 207–248, 256–296, 305–342, 367–406, 439–486, and 489–527; these read NKFS…SIDN, EHTR…SKSS, TASD…YKFA, AHTG…NAAE, NTDY…IPKH, and LSET…TVLE. 5 disordered regions span residues 559–593, 600–619, 630–651, 736–766, and 788–831; these read PELQ…IGGI, TGLT…GPTF, ASSF…ENRE, KNAT…DDDD, and LMNE…DRSR. Residues 630 to 644 are compositionally biased toward low complexity; it reads ASSFNSSSASLTSLT. Residues 753 to 766 are compositionally biased toward acidic residues; sequence DDGDDDDDDDDDDD. Low complexity predominate over residues 815–824; the sequence is SSISSISASR. One copy of the WD 7 repeat lies at 844–884; that stretch reads KIQTLVDLISIATHNASVYLSIDDLTNFKIWILIRDSLLWD. Disordered stretches follow at residues 942–963 and 1014–1047; these read AFRA…KLKE and DEHE…PILQ. Basic and acidic residues-rich tracts occupy residues 952-963 and 1016-1028; these read DAEKKPVSKLKE and HEHQ…HDSP. Ser1037, Ser1081, Ser1088, Ser1090, Ser1124, and Ser1134 each carry phosphoserine. WD repeat units follow at residues 1130–1170 and 1217–1256; these read SRPD…KQLY and LFGI…LITN. Residues 1294-1336 form an RING-type; degenerate zinc finger; the sequence is CVLCERPLKKLTMVILPCGHEGHFQCIQEWFLDENEQECPGGC.

Belongs to the WD repeat RTC1 family.

The protein localises to the vacuole. Functionally, may be involved in a process influencing telomere capping. The chain is Restriction of telomere capping protein 1 (RTC1) from Saccharomyces cerevisiae (strain RM11-1a) (Baker's yeast).